A 215-amino-acid polypeptide reads, in one-letter code: 3,4-dihydroxy-2-butanone 4-phosphate synthase (215 aa).

D-ribulose 5-phosphate contacts are provided by residues 38–39 (RE), aspartate 43, 151–155 (RRGHT), and glutamate 175. Glutamate 39 lines the Mg(2+) pocket. A Mg(2+)-binding site is contributed by histidine 154.

It belongs to the DHBP synthase family. Homodimer. Requires Mg(2+) as cofactor. Mn(2+) serves as cofactor.

It catalyses the reaction D-ribulose 5-phosphate = (2S)-2-hydroxy-3-oxobutyl phosphate + formate + H(+). It participates in cofactor biosynthesis; riboflavin biosynthesis; 2-hydroxy-3-oxobutyl phosphate from D-ribulose 5-phosphate: step 1/1. Its function is as follows. Catalyzes the conversion of D-ribulose 5-phosphate to formate and 3,4-dihydroxy-2-butanone 4-phosphate. The sequence is that of 3,4-dihydroxy-2-butanone 4-phosphate synthase from Haemophilus influenzae (strain 86-028NP).